Reading from the N-terminus, the 176-residue chain is B9 domain-containing protein 2 (176 aa).

A C2 B9-type domain is found at alanine 2–threonine 118.

It belongs to the B9D family. Part of the tectonic-like complex (also named B9 complex).

Its subcellular location is the cytoplasm. The protein localises to the cytoskeleton. It is found in the cilium basal body. It localises to the cilium axoneme. Component of the tectonic-like complex, a complex localized at the transition zone of primary cilia and acting as a barrier that prevents diffusion of transmembrane proteins between the cilia and plasma membranes. This Xenopus laevis (African clawed frog) protein is B9 domain-containing protein 2 (b9d2).